The following is a 446-amino-acid chain: MSDKRRYFGTDGVRGKVGQYPITPDFVLKLGWAAGRVLAKQGTKKVIIGKDTRISGYMLESALEAGLAAAGLKATFTGPMPTPAVAYLTQTFRAEAGIVISASHNPYYDNGIKFFSSEGTKLPDDIELAIEAELDKEIECVESAELGKATRLNDAAGRYIEFCKSTFPSELSLAKLKIVVDCANGATYHIAPNVFTELGADVIAMGVTPNGTNINHEVGATDVRALQQRVVEEQADLGLAFDGDGDRIIMVDHLGNKVDGDQIAYIIARDALRRGELKGGVVGTLMTNLGMENGLKQLGIPFVRAAVGDRYVMEKLLEKGWKIGAENSGHVILLDKVTTGDAIVAALQVLASVVGSELSLNELSKGMTLYPQVLENVRFAGQGNPLEAEAVKKAVEEVEADLGSKGRVLLRKSGTEPLIRVMVEGEDGELVQNSALKIAQAVKDNC.

Ser-103 acts as the Phosphoserine intermediate in catalysis. Mg(2+)-binding residues include Ser-103, Asp-242, Asp-244, and Asp-246. A Phosphoserine modification is found at Ser-103.

The protein belongs to the phosphohexose mutase family. It depends on Mg(2+) as a cofactor. Post-translationally, activated by phosphorylation.

It catalyses the reaction alpha-D-glucosamine 1-phosphate = D-glucosamine 6-phosphate. In terms of biological role, catalyzes the conversion of glucosamine-6-phosphate to glucosamine-1-phosphate. This chain is Phosphoglucosamine mutase, found in Vibrio vulnificus (strain YJ016).